Here is a 342-residue protein sequence, read N- to C-terminus: MTLLLAGDIGGTKTILRLVEVSNSSELHNIYEESYQSGDFPDLVPMVQQFLVKANIPSHPEKACFAIAGPVVNNTAKLTNLVWFLDTERLAQELSIPFISLINDFAAVGYGIFGLSKQDLFTLQAGKHQTEAPIAIIGAGTGLGQGFLIKQGNQYQVFPSEGGHADFAPRNELEFQLLKYLLDKHDIQRVSVERVVSGQGVVAIYQFLRDRKLAIESPEIAQVVRTWEQQAGQAEKTVDPGAAIGKAAVQGSDRLSEQTLQLFIDAYGAEAGNLALKLLPYGGLYIAGGIAPKVLPLIENSNFLLNFSQKGRMRPLLEEIPVHIILNPQVGLIGAALCAARL.

7–12 (GDIGGT) is a binding site for ATP.

Belongs to the bacterial glucokinase family.

Its subcellular location is the cytoplasm. The enzyme catalyses D-glucose + ATP = D-glucose 6-phosphate + ADP + H(+). The chain is Glucokinase from Trichormus variabilis (strain ATCC 29413 / PCC 7937) (Anabaena variabilis).